Here is a 1189-residue protein sequence, read N- to C-terminus: MQKSVRYNEGHALYLAMLARKEGTKRGFLSKKAAEASRWHEKWFALYQNVLFYFEGEQSGRPAGMYLLEGCSCERTPAPPRTNAGPAGARDALDKQYYFTVLFGHDGQKPLELRCEEEQAGKEWMEAIHQASYADILIEREVLMQKYIHLVQIVETEKIATNQLRHQLEDQDTEIERLKSEIVALNKTKERMRPYHVHQEEEDPDIKKIKKVQSFMRGWLCRRKWKTIVQDYICSPHAESMRKRNQIVFTMVEAETEYVHQLYILVNGFLRPLRMAASSKKPPINHDDVSSIFLNSETIMFLHEIFHQGLKARLANWPTLVLADLFDILLPMLNIYQEFVRNHQYSLQVLANCKQNRDFDKLLKQYEANPACEGRMLETFLTYPMFQIPRYIITLHELLAHTPHEHVERKSLEFAKSKLEELSRVMHDEVSDTENIRKNLAIERMIVEGCDILLDTSQTFIRQGSLIQVPSVERGKLSKVRLGSLSLKKEGERQCFLFTKHFLICTRSSGGKLHLLKTGGVLSLIQCTLIEEPDGSDDDPKGSGHMFGHLDFKIVVEPPDAASFTVVLLAPSRQEKAAWMSDISQCVDNIRCNGLMTIVFEENSKVTVPHMIKSDARLHKDDTDICFSKTLNSCKVPQIRYASVERLLERLTDLRFLSIDFLNTFLHTYRIFTTATVVLAKLSDIYKRPFTSIPVRSLELFFATSQNNREHLVDGKSPRLCRKFSSPPPLAVSRTSSPVRARKLSLTSSLNSRIGALDLTNSSSSSSPTTTTHSPAASPPPHTAVLESAPADKAGDSADMSPCRSPTTPRHLRYRQPGGQVADSAHCSVSPASAFAIATAAAGHGSPPGFNNERTCDKEFIIRRTATNRVLNVLRHWVSKHAQDFELNNELKMNVLNLLEEVLRDPDLLPQERKATANILRALSQDDQDDIHLKLEDIIQMTDCPKAECFETLSAMELAEQITLLDHIVFRSIPYEEFLGQGWMKLDKNERTPYIMKTSQHFNEMSNLVASQIMNYADISSRANAIEKWVAVADICRCLHNYNGVLEITSALNRSAIYRLKKTWAKVSKQTKALMDKLQKTVSSEGRFKNLRETLKNCNPPAVPYLGMYLTDLAFIEEGTPNFTEEGLVNFSKMRMISHIIREIRQFQQTAYRIDQQPKVIQYLLDKALVIDEDSLYELSLKIEPRLPA.

The region spanning E22–Y133 is the PH 1 domain. Residues K158 to R193 are a coiled coil. Positions D205–C234 constitute an IQ domain. The DH domain occupies K243–E429. A PH 2 domain is found at P470–D588. The N-terminal Ras-GEF domain maps to K635–G755. Positions V713–P738 are disordered. Phosphoserine is present on residues S725 and S726. Phosphoserine; by CDK5 is present on S736. The interval K743 to N751 is regulates proteasomal degradation. Phosphoserine occurs at positions 745 and 749. Residues L757–P817 form a disordered region. The span at S762 to A776 shows a compositional bias: low complexity. Residues S801, S805, and S924 each carry the phosphoserine modification. Residues S954–R1186 form the Ras-GEF domain. Residues A1051–K1080 are responsible of the affinity for farnesylated versus geranylgeranylated Ras.

In terms of assembly, homooligomer and heterooligomer with RASGRF1. Interacts with Ras and RAC1. Interacts in a calcium-dependent manner with calmodulin. Interacts with EPB49 and probably CDK5R1. Interacts with the AMPA receptor through GRIA1. Interacts with microtubules. Phosphorylated by CDK5; down-regulates RASGRF2-mediated RAC1 activation. In terms of processing, ubiquitinated upon interaction with Ras. Ubiquitination leads to degradation through the 26S proteasome. As to expression, expressed in brain in the nucleus of the solitary tract. Not observed in the hippocampus (at protein level).

It is found in the cytoplasm. Its subcellular location is the cell membrane. The protein resides in the endoplasmic reticulum membrane. In terms of biological role, functions as a calcium-regulated nucleotide exchange factor activating both Ras and RAC1 through the exchange of bound GDP for GTP. Preferentially activates HRAS in vivo compared to RRAS based on their different types of prenylation. Functions in synaptic plasticity by contributing to the induction of long term potentiation. The chain is Ras-specific guanine nucleotide-releasing factor 2 (Rasgrf2) from Mus musculus (Mouse).